We begin with the raw amino-acid sequence, 72 residues long: MAKSDVIEVDGKIIEALPNATFRVELENGHIILCHIAGKMRMHYIKILPGDKVKLELTPYSLDKGRITYRYK.

The S1-like domain occupies 1-72 (MAKSDVIEVD…DKGRITYRYK (72 aa)).

It belongs to the IF-1 family. As to quaternary structure, component of the 30S ribosomal translation pre-initiation complex which assembles on the 30S ribosome in the order IF-2 and IF-3, IF-1 and N-formylmethionyl-tRNA(fMet); mRNA recruitment can occur at any time during PIC assembly.

It is found in the cytoplasm. Functionally, one of the essential components for the initiation of protein synthesis. Stabilizes the binding of IF-2 and IF-3 on the 30S subunit to which N-formylmethionyl-tRNA(fMet) subsequently binds. Helps modulate mRNA selection, yielding the 30S pre-initiation complex (PIC). Upon addition of the 50S ribosomal subunit IF-1, IF-2 and IF-3 are released leaving the mature 70S translation initiation complex. The chain is Translation initiation factor IF-1 from Sulfurimonas denitrificans (strain ATCC 33889 / DSM 1251) (Thiomicrospira denitrificans (strain ATCC 33889 / DSM 1251)).